The primary structure comprises 1563 residues: Integrator complex subunit 5-like protein (1563 aa).

Basic and acidic residues-rich tracts occupy residues 1 to 21 (MKEE…RNDN) and 31 to 44 (EDWR…KNEN). Disordered regions lie at residues 1–63 (MKEE…YDDD), 102–208 (KKSK…NITY), and 270–310 (NSLN…QQNP). A compositionally biased stretch (acidic residues) spans 52–63 (GDSDDDDYYDDD). Composition is skewed to low complexity over residues 109–133 (TAAT…TATA) and 141–202 (NNLL…NNNN). Residues 350–370 (DSIINWSLSTLTIITRLLIIL) form a helical membrane-spanning segment. Over residues 381-398 (QQQQQQQQQQQQQQQQQQ) the composition is skewed to low complexity. Disordered stretches follow at residues 381 to 417 (QQQQ…RQPI), 466 to 498 (SKSS…SSKT), 637 to 694 (FDNN…DNSS), and 784 to 828 (ILNN…SQEI). The segment covering 405 to 414 (FPPPPPPPLR) has biased composition (pro residues). Composition is skewed to low complexity over residues 468–496 (SSSS…SSSS), 639–686 (NNNN…NNNN), and 786–824 (NNNN…QQQQ). The helical transmembrane segment at 877–897 (IIIKLISLIGMDSIYSSLIIL) threads the bilayer. 2 disordered regions span residues 1154–1173 (SGNF…DEYG) and 1268–1303 (KQRM…DQNE). Acidic residues predominate over residues 1160 to 1172 (GDDDDDEYGDDEY). Positions 1277 to 1288 (SIQQNGNINNEQ) are enriched in low complexity. Acidic residues predominate over residues 1289–1303 (QQEEDDNDDADDQNE).

Belongs to the Integrator subunit 5 family. Component of the Integrator complex. The core complex associates with protein phosphatase 2A subunits, to form the Integrator-PP2A (INTAC) complex.

It is found in the nucleus. The protein localises to the cytoplasm. The protein resides in the nucleus membrane. Its function is as follows. Component of the integrator complex, a multiprotein complex that terminates RNA polymerase II (Pol II) transcription in the promoter-proximal region of genes. The integrator complex provides a quality checkpoint during transcription elongation by driving premature transcription termination of transcripts that are unfavorably configured for transcriptional elongation: the complex terminates transcription by (1) catalyzing dephosphorylation of the C-terminal domain (CTD) of Pol II subunit polr2a, (2) degrading the exiting nascent RNA transcript via endonuclease activity and (3) promoting the release of Pol II from bound DNA. The integrator complex is also involved in terminating the synthesis of non-coding Pol II transcripts, such as enhancer RNAs (eRNAs), small nuclear RNAs (snRNAs), telomerase RNAs and long non-coding RNAs (lncRNAs). This Dictyostelium discoideum (Social amoeba) protein is Integrator complex subunit 5-like protein.